Consider the following 152-residue polypeptide: UPF0266 membrane protein YobD (152 aa).

The next 3 membrane-spanning stretches (helical) occupy residues 6–26 (LLLI…QFIM), 45–65 (VDSV…VTSH), and 67–87 (AQMT…IFWI).

It belongs to the UPF0266 family.

It is found in the cell inner membrane. The polypeptide is UPF0266 membrane protein YobD (Salmonella paratyphi C (strain RKS4594)).